Consider the following 395-residue polypeptide: Enoyl-[acyl-carrier-protein] reductase [NADH] (395 aa).

Residues 48–53, 74–75, 111–112, and 139–140 each bind NAD(+); these read GASTGY, FE, DA, and LA. Substrate is bound at residue tyrosine 225. Residue tyrosine 235 is the Proton donor of the active site. NAD(+) is bound by residues lysine 244 and 273 to 275; that span reads LVT.

Belongs to the TER reductase family. In terms of assembly, monomer.

It catalyses the reaction a 2,3-saturated acyl-[ACP] + NAD(+) = a (2E)-enoyl-[ACP] + NADH + H(+). It functions in the pathway lipid metabolism; fatty acid biosynthesis. Functionally, involved in the final reduction of the elongation cycle of fatty acid synthesis (FAS II). Catalyzes the reduction of a carbon-carbon double bond in an enoyl moiety that is covalently linked to an acyl carrier protein (ACP). The polypeptide is Enoyl-[acyl-carrier-protein] reductase [NADH] (Saccharophagus degradans (strain 2-40 / ATCC 43961 / DSM 17024)).